A 227-amino-acid polypeptide reads, in one-letter code: 2,3-bisphosphoglycerate-dependent phosphoglycerate mutase (227 aa).

Residues 7-14, 20-21, Arg-59, 86-89, Lys-97, 113-114, and 182-183 contribute to the substrate site; these read RHGQSEWN, TG, ERHY, RR, and GN. His-8 serves as the catalytic Tele-phosphohistidine intermediate. The Proton donor/acceptor role is filled by Glu-86.

This sequence belongs to the phosphoglycerate mutase family. BPG-dependent PGAM subfamily. As to quaternary structure, homodimer.

The enzyme catalyses (2R)-2-phosphoglycerate = (2R)-3-phosphoglycerate. It participates in carbohydrate degradation; glycolysis; pyruvate from D-glyceraldehyde 3-phosphate: step 3/5. In terms of biological role, catalyzes the interconversion of 2-phosphoglycerate and 3-phosphoglycerate. This chain is 2,3-bisphosphoglycerate-dependent phosphoglycerate mutase, found in Neisseria meningitidis serogroup C (strain 053442).